We begin with the raw amino-acid sequence, 131 residues long: Large ribosomal subunit protein bL17 (131 aa).

Belongs to the bacterial ribosomal protein bL17 family. Part of the 50S ribosomal subunit. Contacts protein L32.

The sequence is that of Large ribosomal subunit protein bL17 from Burkholderia ambifaria (strain MC40-6).